The sequence spans 274 residues: RASVLHTSKKLTRAETIFSNMNYENSSEAEIIWDNVTQSNQSFDDFNRVVGGEDAARGQFPWQVLLHGEIAAFCGGSIVNEKWVVTAAHCIKPGVKITVVAGEHNTEKPEPTEQKRNVIRAIPYHGYNASINKYSHDIALLELDEPLELNSYVTPICIADREYTNIFLKFGYGYVSGWGRVFNRGRSASILQYLKVPLVDRATCLRSTKFTIYNHMFCAGYHEGGKDSCQGDSGGPHVTEVEGTSFLTGIISWGEECAMKGKYGIYTKVSRYEV.

The residue at position 23 (Tyr-23) is a Sulfotyrosine. The N-linked (GlcNAc...) asparagine glycan is linked to Asn-25. A Phosphoserine modification is found at Ser-26. An N-linked (GlcNAc...) asparagine glycan is attached at Asn-35. Residue Thr-37 is glycosylated (O-linked (GalNAc...) threonine). Asn-40 carries an N-linked (GlcNAc...) asparagine glycan. The Peptidase S1 domain maps to 49–274; the sequence is VVGGEDAARG…IYTKVSRYEV (226 aa). A disulfide bridge links Cys-74 with Cys-90. His-89 acts as the Charge relay system in catalysis. Ca(2+) contacts are provided by Glu-103, Asn-105, Glu-110, and Glu-113. Asn-128 carries N-linked (GlcNAc...) asparagine glycosylation. Catalysis depends on Asp-137, which acts as the Charge relay system. 2 cysteine pairs are disulfide-bonded: Cys-204/Cys-218 and Cys-229/Cys-257. The active-site Charge relay system is the Ser-233.

It belongs to the peptidase S1 family. Heterodimer of a light chain and a heavy chain; disulfide-linked. Interacts (inactive and activated) with F11 (activated) in calcium-dependent manner. Interacts with SERPINC1. In terms of processing, activated by factor XIa, which excises the activation peptide. The propeptide can also be removed by snake venom protease. Activated by coagulation factor VIIa-tissue factor (F7-F3) complex in calcium-dependent manner.

It localises to the secreted. The enzyme catalyses Selective cleavage of Arg-|-Ile bond in factor X to form factor Xa.. Functionally, factor IX is a vitamin K-dependent plasma protein that participates in the intrinsic pathway of blood coagulation by converting factor X to its active form in the presence of Ca(2+) ions, phospholipids, and factor VIIIa. This Ovis aries (Sheep) protein is Coagulation factor IX (F9).